We begin with the raw amino-acid sequence, 459 residues long: tRNA modification GTPase MnmE (459 aa).

(6S)-5-formyl-5,6,7,8-tetrahydrofolate-binding residues include arginine 23, glutamate 86, and arginine 125. One can recognise a TrmE-type G domain in the interval 221–380; it reads GLKTVIVGKP…LQDKIESMVY (160 aa). Asparagine 231 is a K(+) binding site. GTP-binding positions include 231–236, 250–256, and 275–278; these read NVGKSS, TDIPGTT, and DTAG. Residue serine 235 coordinates Mg(2+). K(+) contacts are provided by threonine 250, isoleucine 252, and threonine 255. Threonine 256 contacts Mg(2+). Position 459 (lysine 459) interacts with (6S)-5-formyl-5,6,7,8-tetrahydrofolate.

This sequence belongs to the TRAFAC class TrmE-Era-EngA-EngB-Septin-like GTPase superfamily. TrmE GTPase family. In terms of assembly, homodimer. Heterotetramer of two MnmE and two MnmG subunits. K(+) is required as a cofactor.

The protein localises to the cytoplasm. In terms of biological role, exhibits a very high intrinsic GTPase hydrolysis rate. Involved in the addition of a carboxymethylaminomethyl (cmnm) group at the wobble position (U34) of certain tRNAs, forming tRNA-cmnm(5)s(2)U34. The chain is tRNA modification GTPase MnmE from Clostridioides difficile (strain 630) (Peptoclostridium difficile).